The following is a 277-amino-acid chain: uncharacterized protein (277 aa).

The disordered stretch occupies residues Met1–Thr20.

This is an uncharacterized protein from Acidianus convivator (ATV).